The sequence spans 376 residues: Calcium uniporter protein, mitochondrial (376 aa).

The transit peptide at 1-34 directs the protein to the mitochondrion; that stretch reads MAAKVCRSVLLLSRSSGAVASSAYPAFGVSSQRH. At 35–257 the chain is on the mitochondrial matrix side; it reads QGTKTEALSM…LSKKAERRTT (223 aa). An N-terminal MCU domain region spans residues 99–189; it reads VSVVYQNGLP…TSYLVQPPRR (91 aa). Residues 213-254 are a coiled coil; that stretch reads TLRIEEHQLNKERELIGRLEDLNSQLQPLEKVKEELSKKAER. The helical transmembrane segment at 258–280 threads the bilayer; sequence WVLWGGMAYMATQFGILARLTWW. Residues 281–289 are Mitochondrial intermembrane-facing; the sequence is EYSWDIMEP. The Selectivity filter signature appears at 284 to 292; it reads WDIMEPVTY. Position 288 (glutamate 288) interacts with Ca(2+). Residues 290 to 309 form a helical membrane-spanning segment; it reads VTYFITYGTAMAMYAYFVLT. The interval 309 to 314 is juxtamembrane helix; it reads TRQEYL. Over 310 to 376 the chain is Mitochondrial matrix; sequence RQEYLYPDAR…PIQQIDTSKD (67 aa). Residues 336–363 adopt a coiled-coil conformation; it reads FDIEKYNKLKDAIAEAELDLKRLRDPLQ.

This sequence belongs to the MCU (TC 1.A.77) family. As to quaternary structure, homotetramer. Component of the uniplex complex.

Its subcellular location is the mitochondrion inner membrane. It carries out the reaction Ca(2+)(in) = Ca(2+)(out). MCU channel activity is regulated by the heterodimer composed of micu1 and micu2, which act as calcium-sensors. At low calcium levels, micu1 occludes the pore of the MCU channel, preventing mitochondrial calcium uptake. At higher calcium levels, calcium-binding to micu1 and micu2 induces a conformational change that weakens mcu-micu1 interactions and moves the micu1-micu2 heterodimer away from the pore, allowing calcium permeation through the channel. MCU channel activity is gated by emre/smdt1 via the juxtamembrane helix loop. Inhibited by ruthenium red or its derivative Ru360. Functionally, channel-forming and calcium-conducting subunit of the mitochondrial inner membrane calcium uniporter complex (uniplex), which mediates calcium uptake into the mitochondrial matrix. Mcu channel activity is regulated by the calcium-sensor subunits of the uniplex micu1 and micu2. Mitochondrial calcium homeostasis plays key roles in cellular physiology and regulates ATP production, cytoplasmic calcium signals and activation of cell death pathways. Involved in buffering the amplitude of systolic calcium rises in cardiomyocytes. While dispensable for baseline homeostatic cardiac function, acts as a key regulator of short-term mitochondrial calcium loading underlying a 'fight-or-flight' response during acute stress: acts by mediating a rapid increase of mitochondrial calcium in pacemaker cells. Mitochondrial calcium uptake in skeletal muscle cells is involved in muscle size in adults. This chain is Calcium uniporter protein, mitochondrial, found in Danio rerio (Zebrafish).